We begin with the raw amino-acid sequence, 83 residues long: uncharacterized protein (83 aa).

Residues 24–44 (AMTLLIITNTLLIILSYSVLL) traverse the membrane as a helical segment.

It localises to the host membrane. This is an uncharacterized protein from Acidianus sp. F28 (AFV-2).